Consider the following 299-residue polypeptide: Biotin transporter (299 aa).

The next 10 helical transmembrane spans lie at 2–22, 26–46, 56–76, 81–101, 110–130, 137–157, 172–192, 202–222, 233–253, and 256–276; these read ALLI…GEYL, VDSY…FLPF, TISL…MLSF, YLTV…ITLI, LRWG…IIRY, FWVG…GMVG, AFAW…SLLG, LQWS…YFMW, TLGI…LAIW, and QPHW…LWVH. 2 EamA domains span residues 3-128 and 139-274; these read LLII…AGII and VGLL…ASLW.

The protein belongs to the drug/metabolite transporter (DMT) superfamily. 10 TMS drug/metabolite exporter (DME) (TC 2.A.7.3) family.

It is found in the cell inner membrane. The enzyme catalyses biotin(in) = biotin(out). Its function is as follows. Uptake of biotin. This is Biotin transporter from Salmonella typhi.